A 177-amino-acid chain; its full sequence is Protein Flattop (177 aa).

A disordered region spans residues 113–177 (ILGKPHDPDS…TPGPQRPAKS (65 aa)). Residues 115-124 (GKPHDPDSQK) are compositionally biased toward basic and acidic residues. A compositionally biased stretch (polar residues) spans 132-163 (TKTVQQARSPTIIPSSPAANLNSPDELQSSHP).

The protein belongs to the Flattop family. In terms of assembly, microtubule inner protein component of sperm flagellar doublet microtubules. Interacts with DLG3. As to expression, expressed in airway epithelial cells.

Its subcellular location is the cytoplasm. The protein localises to the cytoskeleton. The protein resides in the cilium basal body. It is found in the cell projection. It localises to the cilium. Its subcellular location is the apical cell membrane. The protein localises to the cilium axoneme. The protein resides in the flagellum axoneme. Functionally, microtubule inner protein (MIP) part of the dynein-decorated doublet microtubules (DMTs) in cilia axoneme. Acts as a regulator of cilium basal body docking and positioning in mono- and multiciliated cells. Regulates basal body docking and cilia formation in multiciliated lung cells. Regulates kinocilium positioning and stereocilia bundle morphogenesis in the inner ear. This Homo sapiens (Human) protein is Protein Flattop.